We begin with the raw amino-acid sequence, 2187 residues long: Non-reducing polyketide synthase phnA (2187 aa).

The tract at residues 17 to 255 (LLFGDLSLAH…KYLDIDSPYH (239 aa)) is N-terminal acylcarrier protein transacylase domain (SAT). Residues 383–819 (HSKIAIVGYS…GGNTAMLIED (437 aa)) enclose the Ketosynthase family 3 (KS3) domain. Residues Cys-555, His-690, and His-735 each act as for beta-ketoacyl synthase activity in the active site. Residues 926–1226 (RVAFAFTGQG…GMVKGTIDSR (301 aa)) form a malonyl-CoA:ACP transacylase (MAT) domain region. Ser-1021 functions as the For acyl/malonyl transferase activity in the catalytic mechanism. Residues 1321 to 1637 (PCAQQIVEEF…PRRALDHLLP (317 aa)) are product template (PT) domain. The interval 1324–1458 (QQIVEEFHDS…LDVVLYPGQQ (135 aa)) is N-terminal hotdog fold. Residues 1324–1633 (QQIVEEFHDS…FQGVPRRALD (310 aa)) enclose the PKS/mFAS DH domain. His-1356 acts as the Proton acceptor; for dehydratase activity in catalysis. Positions 1486 to 1633 (TETHLIKRGM…FQGVPRRALD (148 aa)) are C-terminal hotdog fold. Asp-1546 functions as the Proton donor; for dehydratase activity in the catalytic mechanism. Positions 1652-1669 (KAPVAAVAPPRTPTKAAP) are enriched in low complexity. Positions 1652-1681 (KAPVAAVAPPRTPTKAAPQSRQAAPKQKRS) are disordered. 2 Carrier domains span residues 1684–1758 (SDVF…SNSD) and 1796–1874 (SSES…YNVM). At Ser-1718 the chain carries O-(pantetheine 4'-phosphoryl)serine. The segment at 1754–1796 (LSNSDEDDTPSGDSSTYEDSESQITSPASSVGPETPGGGEFGS) is disordered. Residues 1757-1774 (SDEDDTPSGDSSTYEDSE) are compositionally biased toward acidic residues. Position 1834 is an O-(pantetheine 4'-phosphoryl)serine (Ser-1834). Residues 1906-2183 (SSLPQATSIL…PEMGEAVAEF (278 aa)) are thioesterase (TE) domain. Catalysis depends on Ser-2009, which acts as the For thioesterase activity.

It carries out the reaction 6 malonyl-CoA + acetyl-CoA + 5 H(+) = 3,6,7,9-tetrahydroxy-3-methyl-2,3-dihydro-1H-naphtho[2,1-b]pyran-1-one + 6 CO2 + 7 CoA + H2O. It participates in secondary metabolite biosynthesis. Its function is as follows. Non-reducing polyketide synthase; part of the gene cluster that mediates the biosynthesis of phenalenones such as herqueinone, compounds that have been reported to treat tumors, bacterial infections and/or mycoses, and rheumatic diseases. The non-reducing polyketide synthase phnA synthesizes the heptaketide backbone and cyclizes it into the angular, hemiketal-containing naphtho-gamma-pyrone prephenalenone. The product template (PT) domain of phnA catalyzes only the C4-C9 aldol condensation, which is unprecedented among known PT domains. The transformation of prephenalenone to phenalenones requires an FAD-dependent monooxygenase phnB, which catalyzes the C2 aromatic hydroxylation of prephenalenone and ring opening of the gamma-pyrone ring simultaneously. Subsequent intramolecular deprotonation of C3 phenolic oxygen accelerates phenalenone ring closure to yield the tricyclic phenalenone core with a C2 hydroxylation. The prenyltransferase phnF further catalyzes reverse C-prenylation of phenalenone by direct electrophilic substitution at C6, or possibly via first a forward O-prenylation of a neighboring phenol in phenalenone, followed by a Claisen rearrangement. The hydroalkoxylation enzyme phnH catalyzes the 5-exo-trig cyclization via acid catalysis after the spontaneous deprotonation of 7-OH, which leads to the formation of the dihydrobenzofuran atrovenetin. Atrovenetin is further converted to deoxyherqueinone by the O-methyltransferase phnC which can methylate C2-OH to stabilize the northern portion of the phenalenone core. Finally, the oxidoreductase phnG converts deoxyherqueinone to herqueinone via C6 hydroxylation. In Penicillium herquei, this protein is Non-reducing polyketide synthase phnA.